The sequence spans 349 residues: C-X-C chemokine receptor type 1 (349 aa).

Residues 1–44 (MAEAEYFIWIAPEGDFEEEFGNITRMLPTGEYFSPCKRVPMTNR) lie on the Extracellular side of the membrane. Asparagine 22 carries N-linked (GlcNAc...) asparagine glycosylation. A helical membrane pass occupies residues 45–71 (QAVVVFYALVFLLSLLGNSLVMLVILY). The Cytoplasmic segment spans residues 72–80 (RRRTRSVTD). Residues 81 to 101 (VYVLNLAIADLLFSLTLPFLA) traverse the membrane as a helical segment. Residues 102-116 (VSKWKGWIFGTPLCK) lie on the Extracellular side of the membrane. Cysteine 115 and cysteine 192 are joined by a disulfide. Residues 117–138 (MVSLLKEVNFFSGILLLACISV) form a helical membrane-spanning segment. The Cytoplasmic segment spans residues 139 to 159 (DRYLAIVHATRTLTRKRYLVK). The helical transmembrane segment at 160-179 (FVCMGTWGLSLVLSLPFAIF) threads the bilayer. Over 180-204 (RQAYKPYRSGTVCYEVLGEATADLR) the chain is Extracellular. Residues 205–225 (ITLRGLSHIFGFLLPLFIMLV) form a helical membrane-spanning segment. The Cytoplasmic portion of the chain corresponds to 226-247 (CYGLTLRTLFKAHMRQKRRAMW). The chain crosses the membrane as a helical span at residues 248–269 (VIFAVVLVFLLCCLPYNLVLLS). The Extracellular portion of the chain corresponds to 270–290 (DTLLGAHLIQDTCERRNNIDQ). Residues 291 to 313 (ALYITEILGFSHSCLNPVIYAFV) traverse the membrane as a helical segment. The Cytoplasmic portion of the chain corresponds to 314–349 (GQSFRHEFLKILANLVHKEVLTHHSASFRTSLTTIY).

The protein belongs to the G-protein coupled receptor 1 family. Interacts with IL8. Interacts with GNAI2.

It is found in the cell membrane. Receptor to interleukin-8, which is a powerful neutrophils chemotactic factor. Binding of IL-8 to the receptor causes activation of neutrophils. This response is mediated via a G-protein that activates a phosphatidylinositol-calcium second messenger system. The polypeptide is C-X-C chemokine receptor type 1 (Cxcr1) (Rattus norvegicus (Rat)).